The chain runs to 512 residues: MSLKAEEITSIIKSKIANFTPQADINETGTVLQVGDGIARIYGLKNAVAGELLEFPNNVKGLALNLETDNIGCVLMGEDSSIQEGDPVKRTGQVINVPVGDALLGRVVDPLGKPLDGKGPIKTNSSRPLEIVAPGVIERQPVKQPLQTGLKAIDSLVPIGKGQRELIIGDRQTGKTAIAIDAILNQKNQPADQRTLCVYVAIGQKQSTVAQVVQTLTEFGAMEYTVIVSASAADPASLLYIAPYAGSSIAEEFMWNKRDVLIIYDDLSKHAQAYRQMSLLLRRPPGREAYPGDVFYLHSRLLERACKLSDKNGGGSITALPIIETQANDMSAYIPTNVISITDGQIYLESGLFHSGMKPAVNVGLSVSRVGGSAQKKIMRSVSGTLRLDMSQYKELEAFSQFGSDLDKESQQQLTRGKRINELFKQDQYTPMPVEEQVLVFFAGTNGFLDNIEVNLVKEYEKQLLTYFKAEKKDLFEELKNAPEMSENLTNKLKEALTAFGEVFKNSHSTAQ.

169–176 (GDRQTGKT) is an ATP binding site.

This sequence belongs to the ATPase alpha/beta chains family. As to quaternary structure, F-type ATPases have 2 components, CF(1) - the catalytic core - and CF(0) - the membrane proton channel. CF(1) has five subunits: alpha(3), beta(3), gamma(1), delta(1), epsilon(1). CF(0) has three main subunits: a(1), b(2) and c(9-12). The alpha and beta chains form an alternating ring which encloses part of the gamma chain. CF(1) is attached to CF(0) by a central stalk formed by the gamma and epsilon chains, while a peripheral stalk is formed by the delta and b chains.

The protein localises to the cell membrane. It catalyses the reaction ATP + H2O + 4 H(+)(in) = ADP + phosphate + 5 H(+)(out). Functionally, produces ATP from ADP in the presence of a proton gradient across the membrane. The alpha chain is a regulatory subunit. This chain is ATP synthase subunit alpha, found in Elusimicrobium minutum (strain Pei191).